A 449-amino-acid polypeptide reads, in one-letter code: uncharacterized protein (449 aa).

The first 20 residues, 1 to 20 (MWTALVLIWIFSLSLSESHA), serve as a signal peptide directing secretion. Residues 21 to 400 (ASNDPRNFVP…PLTQAVVDKT (380 aa)) are Extracellular-facing. Asn49 is a glycosylation site (N-linked (GlcNAc...) asparagine). Disordered regions lie at residues 72-101 (AHLN…AADG), 154-187 (MTAA…GHPS), and 215-381 (QTVA…PSTQ). Low complexity-rich tracts occupy residues 154-184 (MTAA…TATG) and 215-234 (QTVA…PSPS). Composition is skewed to polar residues over residues 255 to 279 (GPIS…MPSN) and 352 to 367 (TPGT…SSGG). The chain crosses the membrane as a helical span at residues 401 to 421 (LLLVVLLLGVTLFITVLVLFA). Residues 422-449 (LQAYESYKKKDYTQVDYLINGMYADSEM) lie on the Cytoplasmic side of the membrane.

In terms of tissue distribution, highest expression in heart, placenta, liver, pancreas and colon. Also detected in brain, lung, skeletal muscle, kidney, spleen, prostate, testis, ovary and small intestine. Lowest expression in thymus and leukocytes.

The protein resides in the cell membrane. It is found in the golgi apparatus. Its subcellular location is the trans-Golgi network membrane. This is an uncharacterized protein from Homo sapiens (Human).